We begin with the raw amino-acid sequence, 299 residues long: Protease HtpX homolog (299 aa).

2 consecutive transmembrane segments (helical) span residues 15 to 35 (ILLL…GYLF) and 39 to 59 (GLGG…SMIF). His-143 contributes to the Zn(2+) binding site. Glu-144 is a catalytic residue. His-147 contributes to the Zn(2+) binding site. The next 2 membrane-spanning stretches (helical) occupy residues 158-178 (IAVA…RMMW) and 198-218 (IIML…ATLV). Glu-227 serves as a coordination point for Zn(2+).

Belongs to the peptidase M48B family. It depends on Zn(2+) as a cofactor.

The protein localises to the cell membrane. The chain is Protease HtpX homolog from Streptococcus pneumoniae (strain Hungary19A-6).